The primary structure comprises 284 residues: Lipoyl synthase (284 aa).

[4Fe-4S] cluster is bound by residues Cys-36, Cys-41, Cys-47, Cys-62, Cys-66, Cys-69, and Ser-273. In terms of domain architecture, Radical SAM core spans 48–262 (WGKGTATFMI…RTIGLKKGFR (215 aa)).

The protein belongs to the radical SAM superfamily. Lipoyl synthase family. Requires [4Fe-4S] cluster as cofactor.

The protein resides in the cytoplasm. It carries out the reaction [[Fe-S] cluster scaffold protein carrying a second [4Fe-4S](2+) cluster] + N(6)-octanoyl-L-lysyl-[protein] + 2 oxidized [2Fe-2S]-[ferredoxin] + 2 S-adenosyl-L-methionine + 4 H(+) = [[Fe-S] cluster scaffold protein] + N(6)-[(R)-dihydrolipoyl]-L-lysyl-[protein] + 4 Fe(3+) + 2 hydrogen sulfide + 2 5'-deoxyadenosine + 2 L-methionine + 2 reduced [2Fe-2S]-[ferredoxin]. It participates in protein modification; protein lipoylation via endogenous pathway; protein N(6)-(lipoyl)lysine from octanoyl-[acyl-carrier-protein]: step 2/2. In terms of biological role, catalyzes the radical-mediated insertion of two sulfur atoms into the C-6 and C-8 positions of the octanoyl moiety bound to the lipoyl domains of lipoate-dependent enzymes, thereby converting the octanoylated domains into lipoylated derivatives. This Phocaeicola vulgatus (strain ATCC 8482 / DSM 1447 / JCM 5826 / CCUG 4940 / NBRC 14291 / NCTC 11154) (Bacteroides vulgatus) protein is Lipoyl synthase.